A 377-amino-acid polypeptide reads, in one-letter code: UPF0754 membrane protein lmo2224 (377 aa).

The next 2 helical transmembrane spans lie at 1 to 21 and 357 to 377; these read MSVL…GAMT and YLGG…AMWI.

It belongs to the UPF0754 family.

It is found in the cell membrane. This is UPF0754 membrane protein lmo2224 from Listeria monocytogenes serovar 1/2a (strain ATCC BAA-679 / EGD-e).